The sequence spans 644 residues: Zinc finger protein 568 (644 aa).

The 72-residue stretch at 48–119 folds into the KRAB domain; it reads VTFKDVAVDL…EEEMFGRHCP (72 aa). C2H2-type zinc fingers lie at residues 222–244, 250–272, 278–300, 306–328, 334–356, 362–384, 390–412, 418–440, 446–468, 474–496, 502–524, 530–552, 558–580, 586–608, and 614–636; these read FKCN…ERIH, YECK…QKIH, YKCN…HRIH, YACK…ERIH, YECK…EKIH, YACN…MRSH, YKCN…MRSH, YVCS…MRNH, YECS…QRIH, YACT…EKIH, YHCN…EKIH, FKCN…VRSH, YECN…MRSH, and FECN…KRGH.

It belongs to the krueppel C2H2-type zinc-finger protein family. In terms of assembly, interacts with TRIM28.

The protein localises to the nucleus. Has transcriptional repression activity, partially through the recruitment of the corepressor TRIM28 but also has repression activity independently of this interaction. Essential during embryonic development, where it acts as a direct repressor of a placental-specific transcript of IGF2 in early development and regulates convergent extension movements required for axis elongation and tissue morphogenesis in all germ layers. Also important for normal morphogenesis of extraembryonic tissues including the yolk sac, extraembryonic mesoderm and placenta. May enhance proliferation or maintenance of neural stem cells. In Homo sapiens (Human), this protein is Zinc finger protein 568 (ZNF568).